The chain runs to 157 residues: Small heat shock protein ibp (157 aa).

Residues 35–148 (EKPISDTPTY…KPKKISINVP (114 aa)) form the sHSP domain.

This sequence belongs to the small heat shock protein (HSP20) family.

The chain is Small heat shock protein ibp (ibp) from Buchnera aphidicola subsp. Acyrthosiphon pisum (strain APS) (Acyrthosiphon pisum symbiotic bacterium).